A 417-amino-acid polypeptide reads, in one-letter code: Acetate kinase (417 aa).

Asparagine 7 lines the Mg(2+) pocket. Lysine 14 lines the ATP pocket. Residue arginine 104 participates in substrate binding. The Proton donor/acceptor role is filled by aspartate 162. Residues 222 to 226 (HLGNG), 297 to 299 (DMR), and 346 to 350 (GIGEN) contribute to the ATP site. A Mg(2+)-binding site is contributed by glutamate 401.

Belongs to the acetokinase family. Homodimer. Mg(2+) is required as a cofactor. The cofactor is Mn(2+).

Its subcellular location is the cytoplasm. It catalyses the reaction acetate + ATP = acetyl phosphate + ADP. The protein operates within metabolic intermediate biosynthesis; acetyl-CoA biosynthesis; acetyl-CoA from acetate: step 1/2. In terms of biological role, catalyzes the formation of acetyl phosphate from acetate and ATP. Can also catalyze the reverse reaction. This is Acetate kinase from Chloroherpeton thalassium (strain ATCC 35110 / GB-78).